Here is a 164-residue protein sequence, read N- to C-terminus: FMN reductase (NADH) RutF (164 aa).

Belongs to the non-flavoprotein flavin reductase family. RutF subfamily.

It carries out the reaction FMNH2 + NAD(+) = FMN + NADH + 2 H(+). In terms of biological role, catalyzes the reduction of FMN to FMNH2 which is used to reduce pyrimidine by RutA via the Rut pathway. The sequence is that of FMN reductase (NADH) RutF from Escherichia coli O127:H6 (strain E2348/69 / EPEC).